Reading from the N-terminus, the 660-residue chain is Kinesin-like protein KIF22 (660 aa).

Residues 1 to 31 (MSLRAKTCPQRREMASATSGPGRCVSKGGLG) are disordered. Positions 38-363 (RVRVAVRLRP…LNFTARSKEV (326 aa)) constitute a Kinesin motor domain. 122–129 (GPTGAGKT) is an ATP binding site. A disordered region spans residues 391–418 (PSEAKKAKGPEEESTGSPESTAAPASAS). Positions 405 to 418 (TGSPESTAAPASAS) are enriched in low complexity. Phosphoserine occurs at positions 407, 422, and 447. Lys460 participates in a covalent cross-link: Glycyl lysine isopeptide (Lys-Gly) (interchain with G-Cter in SUMO2). The stretch at 460–505 (KRERMVLMKTVEEKNLEIERLKMKQKELEAKVLAQEAPDPREKENT) forms a coiled coil. 2 disordered regions span residues 493 to 516 (AQEA…ASYS) and 534 to 567 (IQKQ…VEKD). The segment covering 505 to 516 (TPTILQPPASYS) has biased composition (polar residues). Ser540 and Ser576 each carry phosphoserine.

The protein belongs to the TRAFAC class myosin-kinesin ATPase superfamily. Kinesin family. As to quaternary structure, interacts with FAM83D and SIAH1. In terms of processing, ubiquitinated; mediated by SIAH1 and leading to its subsequent proteasomal degradation.

The protein localises to the nucleus. It is found in the cytoplasm. Its subcellular location is the cytoskeleton. Functionally, kinesin family member that is involved in spindle formation and the movements of chromosomes during mitosis and meiosis. Binds to microtubules and to DNA. Plays a role in congression of laterally attached chromosomes in NDC80-depleted cells. The sequence is that of Kinesin-like protein KIF22 (Kif22) from Mus musculus (Mouse).